Reading from the N-terminus, the 196-residue chain is Molybdenum cofactor guanylyltransferase (196 aa).

Residues 10-12 (LAG), Lys-23, Asn-51, Asp-69, and Asp-99 contribute to the GTP site. Asp-99 contributes to the Mg(2+) binding site.

The protein belongs to the MobA family. In terms of assembly, monomer. The cofactor is Mg(2+).

It localises to the cytoplasm. The catalysed reaction is Mo-molybdopterin + GTP + H(+) = Mo-molybdopterin guanine dinucleotide + diphosphate. In terms of biological role, transfers a GMP moiety from GTP to Mo-molybdopterin (Mo-MPT) cofactor (Moco or molybdenum cofactor) to form Mo-molybdopterin guanine dinucleotide (Mo-MGD) cofactor. The polypeptide is Molybdenum cofactor guanylyltransferase (Shewanella amazonensis (strain ATCC BAA-1098 / SB2B)).